The following is a 407-amino-acid chain: Putative aspartate aminotransferase, cytoplasmic 2 (407 aa).

K249 carries the N6-(pyridoxal phosphate)lysine modification.

Belongs to the class-I pyridoxal-phosphate-dependent aminotransferase family. Homodimer. It depends on pyridoxal 5'-phosphate as a cofactor.

It is found in the cytoplasm. It catalyses the reaction L-aspartate + 2-oxoglutarate = oxaloacetate + L-glutamate. The chain is Putative aspartate aminotransferase, cytoplasmic 2 (GOT1L1) from Bos taurus (Bovine).